We begin with the raw amino-acid sequence, 285 residues long: MATKLQDGNTPCLAATPSEPRPTVLVFDSGVGGLSVYDEIRHLLPDLHYIYAFDNVAFPYGEKSEEFIVERVVAIVTAVQERYPLALAVVACNTASTVSLPALREKFDFPVVGVVPAIKPAARLTANGIVGLLATRGTVKRSYTHELIARFANECQIEMLGSAEMVELAEAKLHGEDVSLDALKRILRPWLRMKEPPDTVVLGCTHFPLLQEELLQVLPEGTRLVDSGAAIARRTAWLLEHEAPDAKSADANIAFCMAMTPEAEQLLPVLQRYGFETLEKLAVLG.

Substrate-binding positions include 28–29 and 60–61; these read DS and YG. C92 (proton donor/acceptor) is an active-site residue. Position 93-94 (93-94) interacts with substrate; it reads NT. The Proton donor/acceptor role is filled by C204. 205-206 contributes to the substrate binding site; the sequence is TH.

This sequence belongs to the aspartate/glutamate racemases family.

It carries out the reaction L-glutamate = D-glutamate. It participates in cell wall biogenesis; peptidoglycan biosynthesis. Functionally, provides the (R)-glutamate required for cell wall biosynthesis. In Escherichia coli O9:H4 (strain HS), this protein is Glutamate racemase.